A 98-amino-acid chain; its full sequence is Integration host factor subunit beta (98 aa).

Belongs to the bacterial histone-like protein family. In terms of assembly, heterodimer of an alpha and a beta chain.

Its function is as follows. This protein is one of the two subunits of integration host factor, a specific DNA-binding protein that functions in genetic recombination as well as in transcriptional and translational control. This chain is Integration host factor subunit beta, found in Pseudomonas fluorescens (strain SBW25).